A 502-amino-acid polypeptide reads, in one-letter code: ATP synthase subunit alpha (502 aa).

A disordered region spans residues 115–135 (VDGLGPINTTNTRPIESPAPG). 169–176 (GDRQTGKT) serves as a coordination point for ATP.

Belongs to the ATPase alpha/beta chains family. F-type ATPases have 2 components, CF(1) - the catalytic core - and CF(0) - the membrane proton channel. CF(1) has five subunits: alpha(3), beta(3), gamma(1), delta(1), epsilon(1). CF(0) has three main subunits: a(1), b(2) and c(9-12). The alpha and beta chains form an alternating ring which encloses part of the gamma chain. CF(1) is attached to CF(0) by a central stalk formed by the gamma and epsilon chains, while a peripheral stalk is formed by the delta and b chains.

The protein resides in the cell membrane. It catalyses the reaction ATP + H2O + 4 H(+)(in) = ADP + phosphate + 5 H(+)(out). Functionally, produces ATP from ADP in the presence of a proton gradient across the membrane. The alpha chain is a regulatory subunit. In Bacillus cereus (strain G9842), this protein is ATP synthase subunit alpha.